The sequence spans 170 residues: Putative 5'(3')-deoxyribonucleotidase (170 aa).

Asp28 (nucleophile) is an active-site residue. The Mg(2+) site is built by Asp28, Asp30, and Asp134. Asp30 serves as the catalytic Proton donor.

This sequence belongs to the 5'(3')-deoxyribonucleotidase family. Requires Mg(2+) as cofactor.

Functionally, dephosphorylates the 5' and 2'(3')-phosphates of deoxyribonucleotides. This chain is Putative 5'(3')-deoxyribonucleotidase, found in Vibrio parahaemolyticus (KVP40).